The primary structure comprises 31 residues: U13-ctenitoxin-Pn1b (31 aa).

3 disulfide bridges follow: Cys-3–Cys-17, Cys-10–Cys-21, and Cys-16–Cys-30.

Expressed by the venom gland.

It localises to the secreted. Its function is as follows. Acts as a neurotoxin. This Phoneutria nigriventer (Brazilian armed spider) protein is U13-ctenitoxin-Pn1b.